Here is a 239-residue protein sequence, read N- to C-terminus: Ribose-5-phosphate isomerase A (239 aa).

Residues 30-33, 87-90, and 100-103 each bind substrate; these read SGST, DGAD, and KGGG. The Proton acceptor role is filled by glutamate 109. Lysine 127 is a substrate binding site.

This sequence belongs to the ribose 5-phosphate isomerase family. Homodimer.

It catalyses the reaction aldehydo-D-ribose 5-phosphate = D-ribulose 5-phosphate. The protein operates within carbohydrate degradation; pentose phosphate pathway; D-ribose 5-phosphate from D-ribulose 5-phosphate (non-oxidative stage): step 1/1. In terms of biological role, catalyzes the reversible conversion of ribose-5-phosphate to ribulose 5-phosphate. This is Ribose-5-phosphate isomerase A from Synechococcus sp. (strain CC9605).